A 387-amino-acid polypeptide reads, in one-letter code: Probable nitrate transporter NarT (387 aa).

12 consecutive transmembrane segments (helical) span residues 14–34, 45–65, 69–89, 97–117, 137–157, 161–181, 211–231, 246–266, 268–288, 294–314, 330–350, and 358–378; these read TLSLVAGFMAWSIISPLMPFI, ISVILAIPVILGSVLRVPFGY, IVGAKWVFFWSFIVLLLPIFL, GMLMLSGFFLGIGGAIFSVGV, GVGNIGTAVSSFCAPVLAGAI, NTVRSYLIILSIFAILMFFLG, WYFITFGAFVAFGIFLPNFLV, GIFIALATFLRPVGGVIGDKF, AVQALIIDFVIMIIGALILSL, LFTIGCLAISICAGIGNGLIF, GIVSMMGGLGGFFPPLVITFV, and HLAFFFLAIFGVIALITMIHL.

It belongs to the major facilitator superfamily. Nitrate/nitrite porter (TC 2.A.1.8) family.

Its subcellular location is the cell membrane. Functionally, probably required for nitrate uptake under anoxic conditions. Also possibly involved in excretion of nitrite produced by the dissimilatory reduction of nitrate. This chain is Probable nitrate transporter NarT (narT), found in Staphylococcus epidermidis (strain ATCC 35984 / DSM 28319 / BCRC 17069 / CCUG 31568 / BM 3577 / RP62A).